A 305-amino-acid chain; its full sequence is GTPase Era (305 aa).

In terms of domain architecture, Era-type G spans 11–181 (RSGFISFVGR…LDVITRLLPE (171 aa)). The G1 stretch occupies residues 19–26 (GRPNTGKS). 19–26 (GRPNTGKS) is a GTP binding site. Residues 45–49 (ETTRH) form a G2 region. The G3 stretch occupies residues 66–69 (DTPG). Residues 66-70 (DTPGL) and 130-133 (TKVD) contribute to the GTP site. The interval 130–133 (TKVD) is G4. A G5 region spans residues 160 to 162 (VSA). The region spanning 212 to 291 (LKDELPHSVA…YLDLRIKVLK (80 aa)) is the KH type-2 domain.

The protein belongs to the TRAFAC class TrmE-Era-EngA-EngB-Septin-like GTPase superfamily. Era GTPase family. In terms of assembly, monomer.

It localises to the cytoplasm. It is found in the cell membrane. In terms of biological role, an essential GTPase that binds both GDP and GTP, with rapid nucleotide exchange. Plays a role in 16S rRNA processing and 30S ribosomal subunit biogenesis and possibly also in cell cycle regulation and energy metabolism. This is GTPase Era from Corynebacterium diphtheriae (strain ATCC 700971 / NCTC 13129 / Biotype gravis).